The following is a 341-amino-acid chain: tRNA uridine(34) hydroxylase (341 aa).

In terms of domain architecture, Rhodanese spans Ser-139–Thr-233. Cys-193 (cysteine persulfide intermediate) is an active-site residue. 2 stretches are compositionally biased toward basic and acidic residues: residues Ser-306 to Ile-316 and Ile-324 to Lys-341. The segment at Ser-306–Lys-341 is disordered.

It belongs to the TrhO family.

The catalysed reaction is uridine(34) in tRNA + AH2 + O2 = 5-hydroxyuridine(34) in tRNA + A + H2O. In terms of biological role, catalyzes oxygen-dependent 5-hydroxyuridine (ho5U) modification at position 34 in tRNAs. This is tRNA uridine(34) hydroxylase from Colwellia psychrerythraea (strain 34H / ATCC BAA-681) (Vibrio psychroerythus).